Consider the following 175-residue polypeptide: Nucleoside-triphosphatase THEP1 (175 aa).

Residues 16–23 (GMPGVGKT) and 103–110 (VAFIDEIG) each bind ATP.

It belongs to the THEP1 NTPase family.

It catalyses the reaction a ribonucleoside 5'-triphosphate + H2O = a ribonucleoside 5'-diphosphate + phosphate + H(+). Functionally, has nucleotide phosphatase activity towards ATP, GTP, CTP, TTP and UTP. May hydrolyze nucleoside diphosphates with lower efficiency. In Pyrobaculum calidifontis (strain DSM 21063 / JCM 11548 / VA1), this protein is Nucleoside-triphosphatase THEP1.